The sequence spans 565 residues: Deformed epidermal autoregulatory factor 1 homolog (565 aa).

Disordered regions lie at residues 34 to 62 (GGEAEEPVLSRDEDSEEDADSEAERETPR) and 162 to 190 (GLKGPAAPLTPGPQSPPTPLAPGQEKGGT). Pro residues predominate over residues 169-181 (PLTPGPQSPPTPL). A Phosphothreonine modification is found at Thr171. Position 176 is a phosphoserine (Ser176). Thr179 is modified (phosphothreonine). In terms of domain architecture, SAND spans 193–273 (NWDPSVYDSE…QCLIQDGILN (81 aa)). Residues 301–316 (KRRKKENELPTTPVKK) carry the Nuclear localization signal motif. The interval 403–478 (IAPFPEAALP…QLKTLFEQAK (76 aa)) is interaction with LMO4. Thr432 carries the post-translational modification Phosphothreonine. The residue at position 448 (Ser448) is a Phosphoserine. Positions 504, 507, 515, 518, 524, 528, 536, and 540 each coordinate Zn(2+). An MYND-type zinc finger spans residues 504 to 540 (CVNCGREAMSECTGCHKVNYCSTFCQRKDWKDHQHIC).

Homodimer. Isoform 1 and isoform 4 may form a heterodimer. Interacts with LMO2 and CLIM2. Interacts with LMO4; LMO4 blocks export from nucleus. May interact with the corepressors NCOR1 and NCRO2. Identified in a complex with the XRCC5 and XRCC6 heterodimer. Interacts (via the SAND domain) with the DNA-PK complex subunit XRCC6; the interaction is direct and may be inhibited by DNA-binding. Post-translationally, may be phosphorylated by DNA-PK complex in a DNA independent manner (in vitro). In terms of tissue distribution, expressed in various tissues and cells such as in peripheral mononuclear cells and hormone-secreting pituitary cells. Expression in pancreatic lymph nodes of patients with type 1 diabetes is 20 times higher than in healthy controls. Highly expressed in fetal and adult brain.

It is found in the nucleus. The protein localises to the cytoplasm. It localises to the secreted. Its function is as follows. Transcription factor that binds to sequence with multiple copies of 5'-TTC[CG]G-3' present in its own promoter and that of the HNRPA2B1 gene. Down-regulates transcription of these genes. Binds to the retinoic acid response element (RARE) 5'-AGGGTTCACCGAAAGTTCA-3'. Activates the proenkephalin gene independently of promoter binding, probably through protein-protein interaction. When secreted, behaves as an inhibitor of cell proliferation, by arresting cells in the G0 or G1 phase. Required for neural tube closure and skeletal patterning. Regulates epithelial cell proliferation and side-branching in the mammary gland. Controls the expression of peripheral tissue antigens in pancreatic lymph nodes. Isoform 1 displays greater transcriptional activity than isoform 4. Isoform 4 may inhibit transcriptional activity of isoform 1 by interacting with isoform 1 and retaining it in the cytoplasm. Transcriptional activator of EIF4G3. The protein is Deformed epidermal autoregulatory factor 1 homolog (DEAF1) of Homo sapiens (Human).